A 946-amino-acid chain; its full sequence is Leucine--tRNA ligase (946 aa).

Residues 40–51 carry the 'HIGH' region motif; that stretch reads PYPSGAGLHVGH. A 'KMSKS' region motif is present at residues 719-723; the sequence is KMSKS. Lys722 lines the ATP pocket.

It belongs to the class-I aminoacyl-tRNA synthetase family.

It localises to the cytoplasm. The enzyme catalyses tRNA(Leu) + L-leucine + ATP = L-leucyl-tRNA(Leu) + AMP + diphosphate. The protein is Leucine--tRNA ligase of Parabacteroides distasonis (strain ATCC 8503 / DSM 20701 / CIP 104284 / JCM 5825 / NCTC 11152).